The sequence spans 160 residues: SPbeta prophage-derived uncharacterized protein YokE (160 aa).

The sequence is that of SPbeta prophage-derived uncharacterized protein YokE (yokE) from Bacillus subtilis (strain 168).